A 96-amino-acid polypeptide reads, in one-letter code: UPF0235 protein VV1_1522 (96 aa).

The protein belongs to the UPF0235 family.

This chain is UPF0235 protein VV1_1522, found in Vibrio vulnificus (strain CMCP6).